The primary structure comprises 448 residues: Binary larvicide subunit BinB (448 aa).

Residues 1 to 198 (MCDSKDNSGV…TAFVNSSFYA (198 aa)) form a beta-trefoil domain region. A disulfide bridge links Cys-67 with Cys-161. A probable pore-forming domain region spans residues 199–448 (AAIPQLPQTS…NEELIPKINQ (250 aa)).

It belongs to the toxin_10 family. In terms of assembly, forms a heterodimer with BinA. Upon toxin crystal solubilization with NaOH at pH 12, only the 63-kDa (binB) and 43-kDa (binA) proteins were detected. Interacts with mosquito protein Cpm1 which acts as its host receptor. In terms of processing, processed by proteases extracted from C.pipiens larval gut; unlike its partner BinA, it does not form a stable digestion product.

The protein localises to the spore. It is found in the perispore. In terms of biological role, component of a binary toxin active against Culex and some Aedes mosquito larvae. This subunit alone has no toxic larvicidal activity. This subunit is responsible for localized binding to specific regions of the host larval gut. Binary toxin internalization into host gut cells requires both proteins. This Lysinibacillus sphaericus (Bacillus sphaericus) protein is Binary larvicide subunit BinB (binB).